The primary structure comprises 184 residues: Large ribosomal subunit protein uL6 (184 aa).

Belongs to the universal ribosomal protein uL6 family. As to quaternary structure, part of the 50S ribosomal subunit.

In terms of biological role, this protein binds to the 23S rRNA, and is important in its secondary structure. It is located near the subunit interface in the base of the L7/L12 stalk, and near the tRNA binding site of the peptidyltransferase center. This is Large ribosomal subunit protein uL6 from Thermococcus gammatolerans (strain DSM 15229 / JCM 11827 / EJ3).